Reading from the N-terminus, the 426-residue chain is Serine hydroxymethyltransferase (426 aa).

Residues leucine 118 and 122-124 (GHL) each bind (6S)-5,6,7,8-tetrahydrofolate. Lysine 227 bears the N6-(pyridoxal phosphate)lysine mark.

Belongs to the SHMT family. Homodimer. Pyridoxal 5'-phosphate serves as cofactor.

The protein localises to the cytoplasm. It carries out the reaction (6R)-5,10-methylene-5,6,7,8-tetrahydrofolate + glycine + H2O = (6S)-5,6,7,8-tetrahydrofolate + L-serine. The protein operates within one-carbon metabolism; tetrahydrofolate interconversion. Its pathway is amino-acid biosynthesis; glycine biosynthesis; glycine from L-serine: step 1/1. Functionally, catalyzes the reversible interconversion of serine and glycine with tetrahydrofolate (THF) serving as the one-carbon carrier. This reaction serves as the major source of one-carbon groups required for the biosynthesis of purines, thymidylate, methionine, and other important biomolecules. Also exhibits THF-independent aldolase activity toward beta-hydroxyamino acids, producing glycine and aldehydes, via a retro-aldol mechanism. The polypeptide is Serine hydroxymethyltransferase (Mycobacterium avium (strain 104)).